A 414-amino-acid polypeptide reads, in one-letter code: 3-aminobutyryl-CoA aminotransferase (414 aa).

Lys-261 is modified (N6-(pyridoxal phosphate)lysine).

Belongs to the class-III pyridoxal-phosphate-dependent aminotransferase family. As to quaternary structure, homodimer. Pyridoxal 5'-phosphate serves as cofactor.

It carries out the reaction (3S)-3-aminobutanoyl-CoA + 2-oxoglutarate = acetoacetyl-CoA + L-glutamate. Its pathway is amino-acid degradation; L-lysine degradation via acetate pathway. In terms of biological role, 3-aminobutyryl-CoA aminotransferase that acts specifically on coenzyme A (CoA) esters and catalyzes the conversion of 3-aminobutyryl-CoA into acetoacetyl-CoA in an alternative pathway of lysine fermentation. This Cloacimonas acidaminovorans (strain Evry) protein is 3-aminobutyryl-CoA aminotransferase (kat).